Reading from the N-terminus, the 146-residue chain is Protein SprT-like (146 aa).

Residues 6–141 form the SprT-like domain; that stretch reads YVKTVSIEDF…GCGLCQGKLI (136 aa). His64 serves as a coordination point for Zn(2+). Residue Glu65 is part of the active site. His68 contacts Zn(2+).

This sequence belongs to the SprT family. Zn(2+) serves as cofactor.

The protein resides in the cytoplasm. The polypeptide is Protein SprT-like (Streptococcus thermophilus (strain CNRZ 1066)).